The sequence spans 110 residues: METSVVLRSVRLSAQKGRLVVNQIRGLQVDQAIKLLTFSPKKGAVIILKLLESAVANAEHNEGADIDELKVARVFIGQGSSLKRVSPRAKGRGNRISKPTCNIFLTVCNR.

The protein belongs to the universal ribosomal protein uL22 family. In terms of assembly, part of the 50S ribosomal subunit.

Its function is as follows. This protein binds specifically to 23S rRNA; its binding is stimulated by other ribosomal proteins, e.g. L4, L17, and L20. It is important during the early stages of 50S assembly. It makes multiple contacts with different domains of the 23S rRNA in the assembled 50S subunit and ribosome. Functionally, the globular domain of the protein is located near the polypeptide exit tunnel on the outside of the subunit, while an extended beta-hairpin is found that lines the wall of the exit tunnel in the center of the 70S ribosome. The protein is Large ribosomal subunit protein uL22 of Nitrosomonas eutropha (strain DSM 101675 / C91 / Nm57).